The following is a 397-amino-acid chain: Elongation factor Tu (397 aa).

In terms of domain architecture, tr-type G spans 10–206 (KPHVNIGTIG…AVDESIPEPQ (197 aa)). The segment at 19 to 26 (GHIDHGKT) is G1. 19–26 (GHIDHGKT) contributes to the GTP binding site. Threonine 26 serves as a coordination point for Mg(2+). The tract at residues 62 to 66 (GITIS) is G2. The tract at residues 83-86 (DCPG) is G3. Residues 83-87 (DCPGH) and 138-141 (NKAD) contribute to the GTP site. The interval 138–141 (NKAD) is G4. A G5 region spans residues 176-178 (SAL).

Belongs to the TRAFAC class translation factor GTPase superfamily. Classic translation factor GTPase family. EF-Tu/EF-1A subfamily. In terms of assembly, monomer.

It is found in the cytoplasm. It catalyses the reaction GTP + H2O = GDP + phosphate + H(+). GTP hydrolase that promotes the GTP-dependent binding of aminoacyl-tRNA to the A-site of ribosomes during protein biosynthesis. The protein is Elongation factor Tu of Frankia casuarinae (strain DSM 45818 / CECT 9043 / HFP020203 / CcI3).